A 394-amino-acid chain; its full sequence is Elongation factor Tu (394 aa).

In terms of domain architecture, tr-type G spans 10–204; the sequence is KPHVNIGTIG…AVDSYIPQPV (195 aa). The interval 19–26 is G1; sequence GHVDHGKT. GTP is bound at residue 19-26; that stretch reads GHVDHGKT. Threonine 26 serves as a coordination point for Mg(2+). A G2 region spans residues 60 to 64; that stretch reads GITIS. A G3 region spans residues 81–84; it reads DCPG. GTP contacts are provided by residues 81–85 and 136–139; these read DCPGH and NKVD. Positions 136-139 are G4; that stretch reads NKVD. The G5 stretch occupies residues 174 to 176; sequence SAL.

This sequence belongs to the TRAFAC class translation factor GTPase superfamily. Classic translation factor GTPase family. EF-Tu/EF-1A subfamily. Monomer.

It is found in the cytoplasm. The catalysed reaction is GTP + H2O = GDP + phosphate + H(+). Functionally, GTP hydrolase that promotes the GTP-dependent binding of aminoacyl-tRNA to the A-site of ribosomes during protein biosynthesis. The polypeptide is Elongation factor Tu (Rickettsia montanensis).